Reading from the N-terminus, the 259-residue chain is Tryptophan synthase alpha chain (259 aa).

Active-site proton acceptor residues include Glu42 and Asp53.

This sequence belongs to the TrpA family. Tetramer of two alpha and two beta chains.

It carries out the reaction (1S,2R)-1-C-(indol-3-yl)glycerol 3-phosphate + L-serine = D-glyceraldehyde 3-phosphate + L-tryptophan + H2O. It participates in amino-acid biosynthesis; L-tryptophan biosynthesis; L-tryptophan from chorismate: step 5/5. The alpha subunit is responsible for the aldol cleavage of indoleglycerol phosphate to indole and glyceraldehyde 3-phosphate. The sequence is that of Tryptophan synthase alpha chain from Erythrobacter litoralis (strain HTCC2594).